The primary structure comprises 212 residues: Ribonuclease P protein component 3 (212 aa).

This sequence belongs to the eukaryotic/archaeal RNase P protein component 3 family. As to quaternary structure, consists of a catalytic RNA component and at least 5 protein subunits. Forms a heterotetrameric subcomplex with Rnp2. Reconstituted enzyme missing individual protein subunits is suboptimally active, showing each subunit contributes to optimization of activity.

It localises to the cytoplasm. The enzyme catalyses Endonucleolytic cleavage of RNA, removing 5'-extranucleotides from tRNA precursor.. Its function is as follows. Part of ribonuclease P, a protein complex that generates mature tRNA molecules by cleaving their 5'-ends. Not absolutely essential for activity in vitro, however it strongly stimulates activity. Binds RNase P RNA. This is Ribonuclease P protein component 3 from Pyrococcus horikoshii (strain ATCC 700860 / DSM 12428 / JCM 9974 / NBRC 100139 / OT-3).